The chain runs to 502 residues: ATP synthase subunit alpha (502 aa).

Gly-169–Thr-176 lines the ATP pocket.

Belongs to the ATPase alpha/beta chains family. As to quaternary structure, F-type ATPases have 2 components, CF(1) - the catalytic core - and CF(0) - the membrane proton channel. CF(1) has five subunits: alpha(3), beta(3), gamma(1), delta(1), epsilon(1). CF(0) has three main subunits: a(1), b(2) and c(9-12). The alpha and beta chains form an alternating ring which encloses part of the gamma chain. CF(1) is attached to CF(0) by a central stalk formed by the gamma and epsilon chains, while a peripheral stalk is formed by the delta and b chains.

It localises to the cell inner membrane. It catalyses the reaction ATP + H2O + 4 H(+)(in) = ADP + phosphate + 5 H(+)(out). Produces ATP from ADP in the presence of a proton gradient across the membrane. The alpha chain is a regulatory subunit. The polypeptide is ATP synthase subunit alpha (Thermodesulfovibrio yellowstonii (strain ATCC 51303 / DSM 11347 / YP87)).